A 118-amino-acid polypeptide reads, in one-letter code: Ribonuclease P protein component 4 (118 aa).

Zn(2+) contacts are provided by Cys-59, Cys-62, Cys-85, and Cys-88.

Belongs to the eukaryotic/archaeal RNase P protein component 4 family. Consists of a catalytic RNA component and at least 4-5 protein subunits. The cofactor is Zn(2+).

Its subcellular location is the cytoplasm. It catalyses the reaction Endonucleolytic cleavage of RNA, removing 5'-extranucleotides from tRNA precursor.. Functionally, part of ribonuclease P, a protein complex that generates mature tRNA molecules by cleaving their 5'-ends. This is Ribonuclease P protein component 4 from Sulfolobus acidocaldarius (strain ATCC 33909 / DSM 639 / JCM 8929 / NBRC 15157 / NCIMB 11770).